A 95-amino-acid chain; its full sequence is Small ribosomal subunit protein bS6 (95 aa).

It belongs to the bacterial ribosomal protein bS6 family.

In terms of biological role, binds together with bS18 to 16S ribosomal RNA. The chain is Small ribosomal subunit protein bS6 from Nocardia farcinica (strain IFM 10152).